The sequence spans 369 residues: Peptide chain release factor 2 (369 aa).

Residue glutamine 249 is modified to N5-methylglutamine.

Belongs to the prokaryotic/mitochondrial release factor family. In terms of processing, methylated by PrmC. Methylation increases the termination efficiency of RF2.

Its subcellular location is the cytoplasm. In terms of biological role, peptide chain release factor 2 directs the termination of translation in response to the peptide chain termination codons UGA and UAA. This is Peptide chain release factor 2 from Thermosipho melanesiensis (strain DSM 12029 / CIP 104789 / BI429).